Consider the following 919-residue polypeptide: Calcium-transporting ATPase type 2C member 1 (919 aa).

Residues 1-70 lie on the Cytoplasmic side of the membrane; it reads MKVARFQKIP…NEFDISEDEP (70 aa). Residues 71 to 91 form a helical membrane-spanning segment; it reads LWKKYISQFKNPLIMLLLASA. Residues 92-104 are Lumenal-facing; it reads VISVLMHQFDDAV. The chain crosses the membrane as a helical span at residues 105–123; sequence SITVAILIVVTVAFVQEYR. Residues 124–262 are Cytoplasmic-facing; sequence SEKSLEELSK…APKTPLQKSM (139 aa). A helical transmembrane segment spans residues 263–282; the sequence is DLLGKQLSFYSFGIIGIIML. Topologically, residues 283-294 are lumenal; sequence VGWLLGKDILEM. Residues 295-312 traverse the membrane as a helical segment; the sequence is FTISVSLAVAAIPEGLPI. Valine 303, alanine 304, isoleucine 306, and glutamate 308 together coordinate Ca(2+). Residues 313 to 699 are Cytoplasmic-facing; the sequence is VVTVTLALGV…EEGKGIYNNI (387 aa). Residue aspartate 350 is the 4-aspartylphosphate intermediate of the active site. Mg(2+) contacts are provided by aspartate 644 and aspartate 648. A helical transmembrane segment spans residues 700–719; sequence KNFVRFQLSTSIAALTLISL. Topologically, residues 720–729 are lumenal; sequence ATLMNFPNPL. Residues 730 to 750 form a helical membrane-spanning segment; it reads NAMQILWINIIMDGPPAQSLG. Asparagine 738 and aspartate 742 together coordinate Ca(2+). Topologically, residues 751-770 are cytoplasmic; sequence VEPVDKDVIRKPPRNWKDSI. The chain crosses the membrane as a helical span at residues 771 to 793; the sequence is LTKNLILKILVSSIIIVCGTLFV. The Lumenal segment spans residues 794 to 808; that stretch reads FWRELRDNVITPRDT. Residues 809 to 828 form a helical membrane-spanning segment; the sequence is TMTFTCFVFFDMFNALSSRS. Topologically, residues 829–841 are cytoplasmic; it reads QTKSVFEIGLCSN. Residues 842 to 860 traverse the membrane as a helical segment; the sequence is RMFCYAVLGSIMGQLLVIY. Topologically, residues 861–875 are lumenal; that stretch reads FPPLQKVFQTESLSI. The chain crosses the membrane as a helical span at residues 876-896; it reads LDLLFLLGLTSSVCIVAEIIK. Topologically, residues 897 to 919 are cytoplasmic; that stretch reads KVERSREKIQKHVSSTSSSFLEV.

This sequence belongs to the cation transport ATPase (P-type) (TC 3.A.3) family. Type IIA subfamily. In terms of assembly, monomer. Homodimer. Found in most tissues except colon, thymus, spleen and leukocytes. Expressed in keratinocytes (at protein level).

It is found in the golgi apparatus. Its subcellular location is the trans-Golgi network membrane. It localises to the golgi stack membrane. It catalyses the reaction Ca(2+)(in) + ATP + H2O = Ca(2+)(out) + ADP + phosphate + H(+). The enzyme catalyses Mn(2+)(in) + ATP + H2O = Mn(2+)(out) + ADP + phosphate + H(+). In terms of biological role, ATP-driven pump that supplies the Golgi apparatus with Ca(2+) and Mn(2+) ions, both essential cofactors for processing and trafficking of newly synthesized proteins in the secretory pathway. Within a catalytic cycle, acquires Ca(2+) or Mn(2+) ions on the cytoplasmic side of the membrane and delivers them to the lumenal side. The transfer of ions across the membrane is coupled to ATP hydrolysis and is associated with a transient phosphorylation that shifts the pump conformation from inward-facing to outward-facing state. Plays a primary role in the maintenance of Ca(2+) homeostasis in the trans-Golgi compartment with a functional impact on Golgi and post-Golgi protein sorting as well as a structural impact on cisternae morphology. Responsible for loading the Golgi stores with Ca(2+) ions in keratinocytes, contributing to keratinocyte differentiation and epidermis integrity. Participates in Ca(2+) and Mn(2+) ions uptake into the Golgi store of hippocampal neurons and regulates protein trafficking required for neural polarity. May also play a role in the maintenance of Ca(2+) and Mn(2+) homeostasis and signaling in the cytosol while preventing cytotoxicity. In Homo sapiens (Human), this protein is Calcium-transporting ATPase type 2C member 1.